Reading from the N-terminus, the 139-residue chain is Nucleoside diphosphate kinase (139 aa).

ATP-binding residues include lysine 11, phenylalanine 59, arginine 87, threonine 93, arginine 104, and asparagine 114. Residue histidine 117 is the Pros-phosphohistidine intermediate of the active site.

This sequence belongs to the NDK family. In terms of assembly, homotetramer. It depends on Mg(2+) as a cofactor.

Its subcellular location is the cytoplasm. It carries out the reaction a 2'-deoxyribonucleoside 5'-diphosphate + ATP = a 2'-deoxyribonucleoside 5'-triphosphate + ADP. The catalysed reaction is a ribonucleoside 5'-diphosphate + ATP = a ribonucleoside 5'-triphosphate + ADP. In terms of biological role, major role in the synthesis of nucleoside triphosphates other than ATP. The ATP gamma phosphate is transferred to the NDP beta phosphate via a ping-pong mechanism, using a phosphorylated active-site intermediate. The chain is Nucleoside diphosphate kinase from Moorella thermoacetica (strain ATCC 39073 / JCM 9320).